The sequence spans 196 residues: Large ribosomal subunit protein bL9 (196 aa).

This sequence belongs to the bacterial ribosomal protein bL9 family.

Functionally, binds to the 23S rRNA. This chain is Large ribosomal subunit protein bL9, found in Rhodopseudomonas palustris (strain HaA2).